The sequence spans 468 residues: ATP synthase subunit beta (468 aa).

An ATP-binding site is contributed by 155–162; that stretch reads GGAGVGKT.

It belongs to the ATPase alpha/beta chains family. As to quaternary structure, F-type ATPases have 2 components, CF(1) - the catalytic core - and CF(0) - the membrane proton channel. CF(1) has five subunits: alpha(3), beta(3), gamma(1), delta(1), epsilon(1). CF(0) has three main subunits: a(1), b(2) and c(9-12). The alpha and beta chains form an alternating ring which encloses part of the gamma chain. CF(1) is attached to CF(0) by a central stalk formed by the gamma and epsilon chains, while a peripheral stalk is formed by the delta and b chains.

The protein resides in the cell membrane. It catalyses the reaction ATP + H2O + 4 H(+)(in) = ADP + phosphate + 5 H(+)(out). Produces ATP from ADP in the presence of a proton gradient across the membrane. The catalytic sites are hosted primarily by the beta subunits. The chain is ATP synthase subunit beta from Streptococcus pyogenes serotype M6 (strain ATCC BAA-946 / MGAS10394).